Here is a 704-residue protein sequence, read N- to C-terminus: SH3KBP1-binding protein 1 (704 aa).

A2 is subject to N-acetylalanine. Residues 19 to 88 (EVIHLNVGGK…LRTKELDPRG (70 aa)) enclose the BTB domain. The disordered stretch occupies residues 146-165 (VGPQQIGGRPAPVRRSNTMP). At T163 the chain carries Phosphothreonine. WD repeat units lie at residues 233-280 (RLDW…GGSE), 283-322 (VFHL…WQVQ), 324-359 (VQPI…LRMK), 428-466 (VHRS…GMIS), and 548-586 (LECE…DGLG). A disordered region spans residues 609 to 704 (PLASSRGSFP…LKKTLNETSF (96 aa)). A compositionally biased stretch (low complexity) spans 612–631 (SSRGSFPSPSPRTSLTSLHS). Residues 618–623 (PSPSPR) carry the PXXXPR motif. S644 and S646 each carry phosphoserine. The short motif at 678–683 (PTPAPR) is the PXXXPR element. T693 carries the phosphothreonine modification.

This sequence belongs to the KCTD3 family. As to quaternary structure, monomer. Interacts with CUL3; interaction is direct and forms a 5:5 heterodecamer. Interacts (via PXXXPR motifs) with SH3KBP1 (via SH3 domains). Directly interacts with cathepsin B/CTSB.

The protein localises to the lysosome. Its function is as follows. Inhibits CBL-SH3KBP1 complex mediated down-regulation of EGFR signaling by sequestration of SH3KBP1. Binds to SH3KBP1 and prevents its interaction with CBL and inhibits translocation of SH3KBP1 to EGFR containing vesicles upon EGF stimulation. The polypeptide is SH3KBP1-binding protein 1 (Shkbp1) (Mus musculus (Mouse)).